A 229-amino-acid chain; its full sequence is Uracil-DNA glycosylase (229 aa).

The active-site Proton acceptor is Asp65.

It belongs to the uracil-DNA glycosylase (UDG) superfamily. UNG family.

It localises to the cytoplasm. The enzyme catalyses Hydrolyzes single-stranded DNA or mismatched double-stranded DNA and polynucleotides, releasing free uracil.. Functionally, excises uracil residues from the DNA which can arise as a result of misincorporation of dUMP residues by DNA polymerase or due to deamination of cytosine. This Limosilactobacillus fermentum (strain NBRC 3956 / LMG 18251) (Lactobacillus fermentum) protein is Uracil-DNA glycosylase.